Reading from the N-terminus, the 474-residue chain is Replication factor C large subunit (474 aa).

45-52 (GPPGCGKT) is a binding site for ATP. Residues 415–468 (DKKTNNKKGKENKTKNTTKKIKEIKETPKKEEVKEPKKQIEKQKSEKKEPKKQM) are compositionally biased toward basic and acidic residues. Residues 415 to 474 (DKKTNNKKGKENKTKNTTKKIKEIKETPKKEEVKEPKKQIEKQKSEKKEPKKQMTLESFF) form a disordered region.

The protein belongs to the activator 1 small subunits family. RfcL subfamily. As to quaternary structure, heteromultimer composed of small subunits (RfcS) and large subunits (RfcL).

In terms of biological role, part of the RFC clamp loader complex which loads the PCNA sliding clamp onto DNA. This Methanococcus aeolicus (strain ATCC BAA-1280 / DSM 17508 / OCM 812 / Nankai-3) protein is Replication factor C large subunit.